A 455-amino-acid polypeptide reads, in one-letter code: Epoxide hydrolase 1 (455 aa).

The helical; Signal-anchor for type III membrane protein transmembrane segment at 1 to 21 (MWLELVLASLLGFVIYWFVSR) threads the bilayer. Residues 22 to 455 (DKEETLPLGD…RKFVSLAELQ (434 aa)) are Cytoplasmic-facing. The active-site Nucleophile is the aspartate 226. Position 295 is a dimethylated arginine (arginine 295). Residue tyrosine 374 is the Proton donor of the active site. Residue histidine 431 is the Proton acceptor of the active site. An N6-acetyllysine modification is found at lysine 439.

This sequence belongs to the peptidase S33 family.

It localises to the microsome membrane. Its subcellular location is the endoplasmic reticulum membrane. It carries out the reaction cis-stilbene oxide + H2O = (1R,2R)-hydrobenzoin. The catalysed reaction is 1-(4-methoxyphenyl)-N-methyl-N-[(3-methyloxetan-3-yl)methyl]methanamine + H2O = 2-{[(4-methoxybenzyl)(methyl)amino]methyl}-2-methylpropane-1,3-diol. It catalyses the reaction 8,9-epoxy-(5Z,11Z,14Z)-eicosatrienoate + H2O = 8,9-dihydroxy-(5Z,11Z,14Z)-eicosatrienoate. The enzyme catalyses 11,12-epoxy-(5Z,8Z,14Z)-eicosatrienoate + H2O = 11,12-dihydroxy-(5Z,8Z,14Z)-eicosatrienoate. It carries out the reaction 2-(5Z,8Z,11Z,14Z-eicosatetraenoyl)-glycerol + H2O = glycerol + (5Z,8Z,11Z,14Z)-eicosatetraenoate + H(+). Its activity is regulated as follows. Inhibited by 10-hydroxystearamide and methoxy-arachidonyl fluorophosphate. Its function is as follows. Biotransformation enzyme that catalyzes the hydrolysis of arene and aliphatic epoxides to less reactive and more water soluble dihydrodiols by the trans addition of water. May play a role in the metabolism of endogenous lipids such as epoxide-containing fatty acids. Metabolizes the abundant endocannabinoid 2-arachidonoylglycerol (2-AG) to free arachidonic acid (AA) and glycerol. Binds 20(S)-hydroxycholesterol (20(S)-OHC). The chain is Epoxide hydrolase 1 from Rattus norvegicus (Rat).